The following is a 284-amino-acid chain: MVLMIVSGRSGSGKSVALRALEDMGFYCVDNLPVVLLPQLANTLAERNSSAAVSIDVRNMPESPEVFEYAMTQLPDSFSPQLLFLDADRNTLIRRYSDTRRLHPLSSKNLSLESAIDEESDLLEPLRSRADLIIDTSEMSVHELAEMLRTRLLGKRERELTMVFESFGFKHGIPIDADYVFDVRFLPNPHWDPKLRPMTGLDKPVASFLDRHTEVHNFIYQTRSYLEQWLPMLETNNRSYLTVAIGCTGGKHRSVYVAEQLADYFRSRGKNVQSRHRTLEKRKQ.

8-15 (GRSGSGKS) is an ATP binding site. 56–59 (DVRN) contacts GTP. The segment at 266–284 (RSRGKNVQSRHRTLEKRKQ) is RNA-binding.

Belongs to the RapZ-like family. RapZ subfamily. Homotrimer.

Modulates the synthesis of GlmS, by affecting the processing and stability of the regulatory small RNA GlmZ. When glucosamine-6-phosphate (GlcN6P) concentrations are high in the cell, RapZ binds GlmZ and targets it to cleavage by RNase E. Consequently, GlmZ is inactivated and unable to activate GlmS synthesis. Under low GlcN6P concentrations, RapZ is sequestered and inactivated by an other regulatory small RNA, GlmY, preventing GlmZ degradation and leading to synthesis of GlmS. The chain is RNase adapter protein RapZ from Serratia proteamaculans (strain 568).